Here is a 226-residue protein sequence, read N- to C-terminus: Transcriptional activator plp-1 (226 aa).

The protein belongs to the PUR DNA-binding protein family.

Its subcellular location is the nucleus. The protein localises to the chromosome. In terms of biological role, probable transcription activator. Binds telomeric DNA containing repeats of the sequence, 5'-TTAGGC-3'. Binds to end-1 promoter, activating end-1 expression, which is required for endoderm specification during embryonic development. This is Transcriptional activator plp-1 from Caenorhabditis elegans.